The sequence spans 205 residues: Protein phosphatase inhibitor 2 family member B (205 aa).

Positions 1-44 (MAASTASHRPIKGILKNKTSTTSSMVASAEQPRRSVDEELSKKS) are disordered. A2 bears the N-acetylalanine mark. Required for binding PPP1CC regions lie at residues 12–17 (KGILKN) and 43–55 (KSQK…ILAT). Over residues 17–26 (NKTSTTSSMV) the composition is skewed to polar residues. Basic and acidic residues predominate over residues 31–44 (QPRRSVDEELSKKS). S44 carries the post-translational modification Phosphoserine. Phosphothreonine occurs at positions 89 and 92. Residues 111–142 (EPKYRIQEQESSGEEDSDLSPEEREKKRQFEM) form a disordered region. S121, S122, S127, and S130 each carry phosphoserine. Over residues 121 to 130 (SSGEEDSDLS) the composition is skewed to acidic residues. The span at 131-142 (PEEREKKRQFEM) shows a compositional bias: basic and acidic residues. A required for binding PPP1CC catalytic center, displacing metal ions and inhibition of PPP1CC catalytic activity region spans residues 147-150 (HYNE). The interval 163–205 (KDLHDDDEDEEMLETADGESMNTEESNQGSTPSDQQQNKLRSS) is disordered. Positions 167 to 179 (DDDEDEEMLETAD) are enriched in acidic residues. The span at 182–205 (SMNTEESNQGSTPSDQQQNKLRSS) shows a compositional bias: polar residues.

It belongs to the protein phosphatase inhibitor 2 family. Interacts with PPP1CC. Only detected in spermatozoa, both heads and tails.

Its function is as follows. Inhibitor of protein-phosphatase 1. The sequence is that of Protein phosphatase inhibitor 2 family member B from Homo sapiens (Human).